Here is a 295-residue protein sequence, read N- to C-terminus: Dipeptide transport system permease protein DppC (295 aa).

7 helical membrane passes run alanine 27–isoleucine 47, valine 97–isoleucine 117, leucine 132–leucine 152, leucine 156–alanine 178, methionine 202–isoleucine 222, isoleucine 226–leucine 246, and tryptophan 262–glycine 282. The ABC transmembrane type-1 domain occupies threonine 93–glycine 282.

Belongs to the binding-protein-dependent transport system permease family. OppBC subfamily.

The protein localises to the cell inner membrane. Its function is as follows. Part of the ABC transporter DppBCDF involved in dipeptide transport. Responsible for the translocation of the substrate across the membrane. The chain is Dipeptide transport system permease protein DppC (dppC) from Haemophilus influenzae (strain ATCC 51907 / DSM 11121 / KW20 / Rd).